Consider the following 310-residue polypeptide: MRNSLYKKNIISINDLQRNELELVLNKSAMLKKTPQPNLLKNKVIASCFFEASTRTRLSFETAIYRLGASIVGFSDGNNISLEKKGETLTDTISVISSYVDAIIIRHPQEGSARLAAEFSNKKPIFNAGDGANQHPTQTLLDLFTIQETQNRLTQLNIAIVGDLKYGRTVHSLTQALAKFKHNKFYFISPDALKMPNYINNMLDKKEIYWKRHNNIEEIISEIDILYMTRIQKERLDSTEYANAKSKFVLRAAILKNARNNMKILHPLPRIDEIDRDVDYTPYAWYFKQAANGIYARQAILSLVLIEKHL.

2 residues coordinate carbamoyl phosphate: Arg-55 and Thr-56. Residue Lys-85 coordinates L-aspartate. Carbamoyl phosphate-binding residues include Arg-106, His-135, and Gln-138. L-aspartate contacts are provided by Arg-168 and Arg-230. Carbamoyl phosphate-binding residues include Leu-268 and Pro-269.

Belongs to the aspartate/ornithine carbamoyltransferase superfamily. ATCase family. As to quaternary structure, heterododecamer (2C3:3R2) of six catalytic PyrB chains organized as two trimers (C3), and six regulatory PyrI chains organized as three dimers (R2).

The enzyme catalyses carbamoyl phosphate + L-aspartate = N-carbamoyl-L-aspartate + phosphate + H(+). It functions in the pathway pyrimidine metabolism; UMP biosynthesis via de novo pathway; (S)-dihydroorotate from bicarbonate: step 2/3. Functionally, catalyzes the condensation of carbamoyl phosphate and aspartate to form carbamoyl aspartate and inorganic phosphate, the committed step in the de novo pyrimidine nucleotide biosynthesis pathway. In Buchnera aphidicola subsp. Acyrthosiphon pisum (strain APS) (Acyrthosiphon pisum symbiotic bacterium), this protein is Aspartate carbamoyltransferase catalytic subunit.